A 562-amino-acid chain; its full sequence is uncharacterized protein (562 aa).

The next 5 helical transmembrane spans lie at 15–34 (WGGG…AFGI), 41–63 (VAGI…HFNL), 78–97 (LILF…FSAF), 104–126 (LNML…HFIT), and 165–187 (IALG…LLGL). RCK C-terminal domains are found at residues 204 to 286 (QGLG…ITAF) and 289 to 374 (KPIE…VLGN). 6 helical membrane passes run 384 to 403 (LIPI…IPFM), 413 to 430 (LGLA…SRFG), 450 to 472 (IGIS…ETII), 476 to 498 (GYVW…GFIG), 505 to 524 (NYYT…PALA), and 539 to 561 (YATV…ILSL).

Belongs to the AAE transporter (TC 2.A.81) family.

The protein resides in the cell membrane. This is an uncharacterized protein from Bacteroides fragilis (strain YCH46).